A 264-amino-acid chain; its full sequence is Indole-3-glycerol phosphate synthase (264 aa).

The protein belongs to the TrpC family.

It catalyses the reaction 1-(2-carboxyphenylamino)-1-deoxy-D-ribulose 5-phosphate + H(+) = (1S,2R)-1-C-(indol-3-yl)glycerol 3-phosphate + CO2 + H2O. Its pathway is amino-acid biosynthesis; L-tryptophan biosynthesis; L-tryptophan from chorismate: step 4/5. This is Indole-3-glycerol phosphate synthase from Carboxydothermus hydrogenoformans (strain ATCC BAA-161 / DSM 6008 / Z-2901).